The following is a 1372-amino-acid chain: Paired amphipathic helix protein Sin3-like 1 (1372 aa).

The segment at 1-50 (MKRIRDDVYASGSQFRRPLGSSRGQLCGQSPVHGSGDTEEEEEGGSRRVS) is disordered. PAH domains are found at residues 51 to 121 (QKLT…LPKG) and 136 to 206 (KTVE…LPAS). The segment covering 210-222 (HSAAQHSRSQAQQ) has biased composition (low complexity). Disordered stretches follow at residues 210–244 (HSAA…ERRR) and 272–323 (REQR…SGSA). Over residues 272–315 (REQRKRLDKENRARRGRDLDDREAGQDNLHHFPEKRKSSRRAEA) the composition is skewed to basic and acidic residues. A PAH 3 domain is found at 331 to 400 (LKSMYKQAFV…DEFNQFFERC (70 aa)). Disordered regions lie at residues 764–783 (DVNH…GGDT), 791–817 (LKSA…NKDS), and 934–1056 (GLRS…AEGM). The span at 938–957 (DSSKGTRNSDDPEGPSRNEK) shows a compositional bias: basic and acidic residues. Acidic residues-rich tracts occupy residues 990 to 1013 (AEAE…DSEN) and 1028 to 1042 (SQDE…EHDE). S1049 is modified (phosphoserine).

In terms of assembly, interacts (via PAH3) with ALY2. Interacts (via PAH2) with TBP1. Interacts with ALY3, GATA21, TRP2, TKI1, VAL1, SKP1B, FBX5 and PUB14.

Its subcellular location is the nucleus. In terms of biological role, acts as a transcriptional repressor. A histone deacetylase (HDAC) activity is required for transcription repression. May play a role in telomere stability. In Arabidopsis thaliana (Mouse-ear cress), this protein is Paired amphipathic helix protein Sin3-like 1 (SNL1).